The sequence spans 132 residues: Small ribosomal subunit protein uS8 (132 aa).

The protein belongs to the universal ribosomal protein uS8 family. In terms of assembly, part of the 30S ribosomal subunit. Contacts proteins S5 and S12.

Its function is as follows. One of the primary rRNA binding proteins, it binds directly to 16S rRNA central domain where it helps coordinate assembly of the platform of the 30S subunit. The polypeptide is Small ribosomal subunit protein uS8 (Bacillus subtilis (strain 168)).